A 392-amino-acid polypeptide reads, in one-letter code: Phospho-N-acetylmuramoyl-pentapeptide-transferase (392 aa).

11 helical membrane passes run 24–44 (YLTL…LIAG), 76–96 (TMGG…WFDL), 100–120 (FVWI…VDDW), 137–157 (YFWQ…SISE), 167–187 (FITW…GLLV), 193–213 (VSYP…IVGS), 225–245 (GLAI…AYVT), 262–282 (SGEL…FLWF), 289–309 (VFMG…IAVI), 314–334 (IVLA…MLQV), and 369–389 (QVVV…LTTL).

The protein belongs to the glycosyltransferase 4 family. MraY subfamily. Mg(2+) serves as cofactor.

It localises to the cell inner membrane. It catalyses the reaction UDP-N-acetyl-alpha-D-muramoyl-L-alanyl-gamma-D-glutamyl-meso-2,6-diaminopimeloyl-D-alanyl-D-alanine + di-trans,octa-cis-undecaprenyl phosphate = di-trans,octa-cis-undecaprenyl diphospho-N-acetyl-alpha-D-muramoyl-L-alanyl-D-glutamyl-meso-2,6-diaminopimeloyl-D-alanyl-D-alanine + UMP. It functions in the pathway cell wall biogenesis; peptidoglycan biosynthesis. Functionally, catalyzes the initial step of the lipid cycle reactions in the biosynthesis of the cell wall peptidoglycan: transfers peptidoglycan precursor phospho-MurNAc-pentapeptide from UDP-MurNAc-pentapeptide onto the lipid carrier undecaprenyl phosphate, yielding undecaprenyl-pyrophosphoryl-MurNAc-pentapeptide, known as lipid I. This chain is Phospho-N-acetylmuramoyl-pentapeptide-transferase, found in Acidovorax ebreus (strain TPSY) (Diaphorobacter sp. (strain TPSY)).